The following is a 3263-amino-acid chain: Protein unc-80 (3263 aa).

7 disordered regions span residues lysine 491–glycine 527, asparagine 627–serine 666, proline 939–valine 1010, aspartate 1042–alanine 1076, serine 1380–alanine 1475, leucine 1633–alanine 1660, and methionine 1680–lysine 1721. Positions asparagine 499–arginine 508 are enriched in basic and acidic residues. Polar residues predominate over residues methionine 509–serine 519. Residues threonine 644–arginine 658 are compositionally biased toward low complexity. Composition is skewed to polar residues over residues glycine 956 to alanine 967 and serine 981 to serine 1005. Residues aspartate 1042–serine 1055 are compositionally biased toward acidic residues. Over residues glutamine 1393 to valine 1402 the composition is skewed to polar residues. Residues histidine 1435–lysine 1447 are compositionally biased toward basic residues. Composition is skewed to polar residues over residues glycine 1460–isoleucine 1469 and leucine 1633–alanine 1653. The segment covering methionine 1680–threonine 1710 has biased composition (basic and acidic residues). 5 consecutive transmembrane segments (helical) span residues alanine 2088 to phenylalanine 2108, alanine 2318 to histidine 2338, tyrosine 2352 to methionine 2372, alanine 2953 to tryptophan 2973, and alanine 2995 to isoleucine 3015. Disordered stretches follow at residues tyrosine 3078–serine 3166 and arginine 3178–leucine 3198. The span at isoleucine 3124–isoleucine 3135 shows a compositional bias: acidic residues. Residues asparagine 3138–serine 3166 are compositionally biased toward polar residues.

Belongs to the unc-80 family. In terms of tissue distribution, expressed in the nervous system. Expressed in both acetylcholine and GABA motor neurons.

The protein localises to the membrane. Functionally, probable component of the nca-1 sodium channel complex, a cation channel that regulates neuronal activity by transmitting depolarization signals to synapses. Regulates the transition from slow to rapid forms of locomotion. Required for localization of nca-1 along axons and in non-synaptic regions. Contributes to endocytosis defects in synaptojanin mutants. Involved in the control of anasthetic response to halothane. This Caenorhabditis elegans protein is Protein unc-80 (unc-80).